The following is a 226-amino-acid chain: Glycerol-3-phosphate acyltransferase (226 aa).

A run of 6 helical transmembrane segments spans residues 1–21 (MGLWLSLCGAVVVVAYLLGSF), 56–76 (GPGAFVLGLDCLKGVLAIALV), 102–122 (LVTLAGIAAILGHSKSIFLGF), 134–154 (ILLAMNWQVGLATFGVFAVVV), 159–178 (IVSLSSIMGAIAVSIVMVVL), and 182–197 (LPYILFGIAGGLYVIL).

Belongs to the PlsY family. As to quaternary structure, probably interacts with PlsX.

Its subcellular location is the cell inner membrane. The catalysed reaction is an acyl phosphate + sn-glycerol 3-phosphate = a 1-acyl-sn-glycero-3-phosphate + phosphate. Its pathway is lipid metabolism; phospholipid metabolism. Functionally, catalyzes the transfer of an acyl group from acyl-phosphate (acyl-PO(4)) to glycerol-3-phosphate (G3P) to form lysophosphatidic acid (LPA). This enzyme utilizes acyl-phosphate as fatty acyl donor, but not acyl-CoA or acyl-ACP. In Trichormus variabilis (strain ATCC 29413 / PCC 7937) (Anabaena variabilis), this protein is Glycerol-3-phosphate acyltransferase.